The sequence spans 320 residues: Acetyl-coenzyme A carboxylase carboxyl transferase subunit alpha (320 aa).

The CoA carboxyltransferase C-terminal domain maps to 34–288 (RLEEALEAAR…GEALERVLAG (255 aa)).

It belongs to the AccA family. As to quaternary structure, acetyl-CoA carboxylase is a heterohexamer composed of biotin carboxyl carrier protein (AccB), biotin carboxylase (AccC) and two subunits each of ACCase subunit alpha (AccA) and ACCase subunit beta (AccD).

It localises to the cytoplasm. The enzyme catalyses N(6)-carboxybiotinyl-L-lysyl-[protein] + acetyl-CoA = N(6)-biotinyl-L-lysyl-[protein] + malonyl-CoA. It participates in lipid metabolism; malonyl-CoA biosynthesis; malonyl-CoA from acetyl-CoA: step 1/1. Functionally, component of the acetyl coenzyme A carboxylase (ACC) complex. First, biotin carboxylase catalyzes the carboxylation of biotin on its carrier protein (BCCP) and then the CO(2) group is transferred by the carboxyltransferase to acetyl-CoA to form malonyl-CoA. The polypeptide is Acetyl-coenzyme A carboxylase carboxyl transferase subunit alpha (Rubrobacter xylanophilus (strain DSM 9941 / JCM 11954 / NBRC 16129 / PRD-1)).